The primary structure comprises 354 residues: Guanine nucleotide-binding protein G(q) subunit alpha (354 aa).

Residues cysteine 3 and cysteine 4 are each lipidated (S-palmitoyl cysteine). A G-alpha domain is found at 32–354 (RELKLLLLGT…QLNLKEYNLV (323 aa)). Residues 35 to 48 (KLLLLGTGESGKST) are G1 motif. GTP-binding positions include 40 to 47 (GTGESGKS), 174 to 180 (LRVRVPT), 199 to 203 (DVGGQ), 269 to 272 (NKKD), and alanine 326. Residues serine 47 and threonine 180 each contribute to the Mg(2+) site. Positions 172-180 (DILRVRVPT) are G2 motif. The interval 195 to 204 (FRMVDVGGQR) is G3 motif. Residues 265-272 (ILFLNKKD) are G4 motif. Positions 324–329 (TCATDT) are G5 motif.

The protein belongs to the G-alpha family. G(q) subfamily. As to quaternary structure, g proteins are composed of 3 units; alpha, beta and gamma. The alpha chain contains the guanine nucleotide binding site. As to expression, a high concentration was found in the retinal light-sensitive outer segment.

In terms of biological role, guanine nucleotide-binding proteins (G proteins) are involved as modulators or transducers in various transmembrane signaling systems. The G(q) alpha subunit is involved in the light-dependent activation of phospholipase C. The polypeptide is Guanine nucleotide-binding protein G(q) subunit alpha (Loligo forbesii (Veined squid)).